The sequence spans 128 residues: QQSKPEDLLKLRQGLMQTLKSQWVPIAGFAAGKADLPADAAQRAENMAMVAKLAPIGWAKGTEALPNGETKPEAFGSKSAEFLEGWKALATESTKLAAAAKAGPDALKAQAAATGKVCKACHEEFKQD.

Heme c is bound by residues Gln-13, Gln-17, Glu-69, Thr-70, Cys-118, Cys-121, and His-122.

Homodimer. Post-translationally, binds 1 heme c group covalently per subunit.

In terms of biological role, cytochrome c' is the most widely occurring bacterial c-type cytochrome. Cytochromes c' are high-spin proteins and the heme has no sixth ligand. Their exact function is not known. The chain is Cytochrome c' from Magnetospirillum molischianum (Rhodospirillum molischianum).